The sequence spans 316 residues: Transaldolase (316 aa).

The active-site Schiff-base intermediate with substrate is the K132.

Belongs to the transaldolase family. Type 1 subfamily. Homodimer.

It is found in the cytoplasm. The enzyme catalyses D-sedoheptulose 7-phosphate + D-glyceraldehyde 3-phosphate = D-erythrose 4-phosphate + beta-D-fructose 6-phosphate. The protein operates within carbohydrate degradation; pentose phosphate pathway; D-glyceraldehyde 3-phosphate and beta-D-fructose 6-phosphate from D-ribose 5-phosphate and D-xylulose 5-phosphate (non-oxidative stage): step 2/3. Functionally, transaldolase is important for the balance of metabolites in the pentose-phosphate pathway. This is Transaldolase from Vibrio vulnificus (strain YJ016).